Reading from the N-terminus, the 304-residue chain is Peptidyl-prolyl cis-trans isomerase FKBP35 (304 aa).

Positions 37–126 constitute a PPIase FKBP-type domain; it reads GNEVTVHYVG…LFEIELLSFR (90 aa). TPR repeat units follow at residues 144–177, 194–227, and 228–261; these read AFDI…FIHT, ISCN…DKNN, and VKAL…NPNN.

Belongs to the FKBP-type PPIase family. As to quaternary structure, homodimer. Interacts (via TPR repeats) with HSP90 (probably via MEEVD motif).

Its subcellular location is the cytoplasm. The protein localises to the nucleus. It carries out the reaction [protein]-peptidylproline (omega=180) = [protein]-peptidylproline (omega=0). With respect to regulation, inhibited by FK506 and its derivates, such as ascomycin, and rapamycin. FK506 and rapamycin inhibit peptidylprolyl isomerase activity but not chaperone activity. Inhibited by N-(2-ethyl-phenyl)-2-(3H-imidazao [4, 5-b] pyridin-2-yl-sulfanyl)-acetamide (D44). Not inhibited by cyclosporin A. Inhibition of calcineurin phosphatase activity is enhanced by FK506. In terms of biological role, has peptidylprolyl isomerase (PPIase) and co-chaperone activities. Assists protein folding by catalyzing the peptidyl conversion of cis and trans rotamers of the prolyl amide bond of protein substrates. Inhibits calcineurin phosphatase activity in vitro. Plays an essential role in merozoite egress from host erythrocytes. This chain is Peptidyl-prolyl cis-trans isomerase FKBP35, found in Plasmodium falciparum (isolate 3D7).